We begin with the raw amino-acid sequence, 103 residues long: Growth-regulated alpha protein (103 aa).

Residues 1-30 (MARAANPAPRLLGAAMLLLLLVAAGRRAAG) form the signal peptide. 2 disulfide bridges follow: Cys-39-Cys-65 and Cys-41-Cys-81.

This sequence belongs to the intercrine alpha (chemokine CxC) family.

The protein localises to the secreted. In terms of biological role, has chemotactic activity for neutrophils. This chain is Growth-regulated alpha protein (CXCL1), found in Ovis aries (Sheep).